The chain runs to 456 residues: Bifunctional protein GlmU (456 aa).

Positions 1 to 229 are pyrophosphorylase; it reads MLNSAMSVVI…ISETDGVNNR (229 aa). UDP-N-acetyl-alpha-D-glucosamine is bound by residues 11 to 14, Lys-25, Gln-76, 81 to 82, 103 to 105, Gly-140, Glu-154, Asn-169, and Asn-227; these read LAAG, GT, and YGD. Asp-105 serves as a coordination point for Mg(2+). Asn-227 lines the Mg(2+) pocket. A linker region spans residues 230-250; sequence LQLSRLERIYQAEQAEKLLLS. Residues 251 to 456 form an N-acetyltransferase region; sequence GVMLRDPARF…QGWQRPVKKK (206 aa). UDP-N-acetyl-alpha-D-glucosamine is bound by residues Arg-333 and Lys-351. The Proton acceptor role is filled by His-363. Positions 366 and 377 each coordinate UDP-N-acetyl-alpha-D-glucosamine. Acetyl-CoA-binding positions include Ala-380, 386-387, Ser-405, Ala-423, and Arg-440; that span reads NY.

In the N-terminal section; belongs to the N-acetylglucosamine-1-phosphate uridyltransferase family. This sequence in the C-terminal section; belongs to the transferase hexapeptide repeat family. Homotrimer. The cofactor is Mg(2+).

It localises to the cytoplasm. It catalyses the reaction alpha-D-glucosamine 1-phosphate + acetyl-CoA = N-acetyl-alpha-D-glucosamine 1-phosphate + CoA + H(+). The enzyme catalyses N-acetyl-alpha-D-glucosamine 1-phosphate + UTP + H(+) = UDP-N-acetyl-alpha-D-glucosamine + diphosphate. The protein operates within nucleotide-sugar biosynthesis; UDP-N-acetyl-alpha-D-glucosamine biosynthesis; N-acetyl-alpha-D-glucosamine 1-phosphate from alpha-D-glucosamine 6-phosphate (route II): step 2/2. Its pathway is nucleotide-sugar biosynthesis; UDP-N-acetyl-alpha-D-glucosamine biosynthesis; UDP-N-acetyl-alpha-D-glucosamine from N-acetyl-alpha-D-glucosamine 1-phosphate: step 1/1. It participates in bacterial outer membrane biogenesis; LPS lipid A biosynthesis. Catalyzes the last two sequential reactions in the de novo biosynthetic pathway for UDP-N-acetylglucosamine (UDP-GlcNAc). The C-terminal domain catalyzes the transfer of acetyl group from acetyl coenzyme A to glucosamine-1-phosphate (GlcN-1-P) to produce N-acetylglucosamine-1-phosphate (GlcNAc-1-P), which is converted into UDP-GlcNAc by the transfer of uridine 5-monophosphate (from uridine 5-triphosphate), a reaction catalyzed by the N-terminal domain. The polypeptide is Bifunctional protein GlmU (Salmonella gallinarum (strain 287/91 / NCTC 13346)).